A 650-amino-acid chain; its full sequence is Acetyl-coenzyme A synthetase (650 aa).

CoA-binding positions include 191–194 (RGGR), threonine 311, and asparagine 335. ATP is bound by residues 387-389 (GEP), 411-416 (DTWWQT), aspartate 500, and arginine 515. Residue serine 523 participates in CoA binding. Arginine 526 is a binding site for ATP. Residues valine 537, histidine 539, and valine 542 each coordinate Mg(2+). Arginine 584 provides a ligand contact to CoA. Lysine 609 is modified (N6-acetyllysine).

This sequence belongs to the ATP-dependent AMP-binding enzyme family. The cofactor is Mg(2+). In terms of processing, acetylated. Deacetylation by the SIR2-homolog deacetylase activates the enzyme.

The enzyme catalyses acetate + ATP + CoA = acetyl-CoA + AMP + diphosphate. Catalyzes the conversion of acetate into acetyl-CoA (AcCoA), an essential intermediate at the junction of anabolic and catabolic pathways. AcsA undergoes a two-step reaction. In the first half reaction, AcsA combines acetate with ATP to form acetyl-adenylate (AcAMP) intermediate. In the second half reaction, it can then transfer the acetyl group from AcAMP to the sulfhydryl group of CoA, forming the product AcCoA. The sequence is that of Acetyl-coenzyme A synthetase from Shewanella oneidensis (strain ATCC 700550 / JCM 31522 / CIP 106686 / LMG 19005 / NCIMB 14063 / MR-1).